The primary structure comprises 511 residues: Ribonuclease E/G-like protein (511 aa).

The 83-residue stretch at 35–117 (SDIYLGTVDK…LTANITLSGR (83 aa)) folds into the S1 motif domain. 2 residues coordinate Mg(2+): D296 and D339.

The protein belongs to the RNase E/G family. Mg(2+) is required as a cofactor.

It localises to the plastid. The protein resides in the chloroplast stroma. Involved in intercistronic processing of primary transcripts from chloroplast operons. The endonucleolytic activity of the enzyme depends on the number of phosphates at the 5' end, is inhibited by structured RNA, and preferentially cleaves A/U-rich sequences. In Porphyra purpurea (Red seaweed), this protein is Ribonuclease E/G-like protein (rne).